Reading from the N-terminus, the 352-residue chain is Sporozoite surface protein P36 (352 aa).

The N-terminal stretch at 1 to 29 (MKQYEFARHINTYFSVAQNMLFSIFLYYA) is a signal peptide. 6-Cys domains follow at residues 53–199 (YMCI…IKKA) and 210–351 (YIKG…STKE). The cysteines at positions 57 and 90 are disulfide-linked. N-linked (GlcNAc...) asparagine glycans are attached at residues Asn-89, Asn-97, Asn-111, Asn-156, and Asn-160. 5 disulfides stabilise this stretch: Cys-104/Cys-179, Cys-122/Cys-177, Cys-214/Cys-238, Cys-252/Cys-333, and Cys-269/Cys-331. The N-linked (GlcNAc...) asparagine glycan is linked to Asn-254.

The protein resides in the cell membrane. The protein localises to the cell surface. Involved in sporozoite infection of hepatocytes and replication therein. This is Sporozoite surface protein P36 (PBS36) from Plasmodium berghei (strain Anka).